The chain runs to 352 residues: Divinyl chlorophyll a/b light-harvesting protein PcbH (352 aa).

The next 6 membrane-spanning stretches (helical) occupy residues 27–47 (FIGS…ASCL), 88–108 (VATI…AGLA), 140–160 (FILG…VEWA), 202–222 (VMSG…FHIA), 242–262 (AVLS…AFWA), and 309–329 (LVNV…WHAL).

This sequence belongs to the PsbB/PsbC family. IsiA/Pcb subfamily. In terms of assembly, the antenna complex consists of divinyl chlorophylls (a and b) and divinyl chlorophyll a/b binding proteins and binds more divinyl chlorophyll b than does the antenna complex from high-light-adapted Prochlorococcus. Requires divinyl chlorophyll a as cofactor. It depends on divinyl chlorophyll b as a cofactor.

The protein resides in the cellular thylakoid membrane. Functionally, the antenna complex functions as a light receptor, it captures and delivers excitation energy to photosystems II and I. The Prochlorales pcb genes are not related to higher plant LHCs. The chain is Divinyl chlorophyll a/b light-harvesting protein PcbH (pcbH) from Prochlorococcus marinus (strain SARG / CCMP1375 / SS120).